The chain runs to 411 residues: Probable glutamate dehydrogenase 3 (411 aa).

The active site involves lysine 102.

This sequence belongs to the Glu/Leu/Phe/Val dehydrogenases family.

The catalysed reaction is L-glutamate + NAD(+) + H2O = 2-oxoglutarate + NH4(+) + NADH + H(+). The enzyme catalyses L-glutamate + NADP(+) + H2O = 2-oxoglutarate + NH4(+) + NADPH + H(+). This chain is Probable glutamate dehydrogenase 3 (GSH3), found in Arabidopsis thaliana (Mouse-ear cress).